Consider the following 302-residue polypeptide: MTATAETSTGTKVVLGQNQYGKAEVRLVKVTRNTARHEIQDLNVTSQLRGDFEAAHTAGDNAHVVATDTQKNTVYAFARDGFATTEEFLLRLGKHFTEGFDWVTGGRWAAQQFFWDRINDHDHAFSRNKSEVRTAVLEISGSEQAIVAGIEGLTVLKSTGSEFHGFPRDKYTTLQETTDRILATDVSARWRYNTVEVDFDAVYASVRGLLLKAFAETHSLALQQTMYEMGRAVIETHPEIDEIKMSLPNKHHFLVDLQPFGQDNPNEVFYAADRPYGLIEATIQREGSRADHPIWSNIAGFC.

Active-site charge relay system residues include lysine 22 and threonine 67. The urate site is built by threonine 67, aspartate 68, phenylalanine 163, arginine 180, glutamine 223, and asparagine 249. The Charge relay system role is filled by histidine 251.

Belongs to the uricase family. In terms of assembly, homotetramer.

The enzyme catalyses urate + O2 + H2O = 5-hydroxyisourate + H2O2. Its pathway is purine metabolism; urate degradation; (S)-allantoin from urate: step 1/3. Its function is as follows. Catalyzes the oxidation of uric acid to 5-hydroxyisourate, which is further processed to form (S)-allantoin. The polypeptide is Uricase (uox) (Arthrobacter globiformis).